Here is a 268-residue protein sequence, read N- to C-terminus: Thymidylate synthase (268 aa).

Residues Arg26 and 131–132 contribute to the dUMP site; that span reads RR. Cys151 functions as the Nucleophile in the catalytic mechanism. DUMP is bound by residues 171–174, Asn182, and 212–214; these read RSAD and HIY. Asp174 is a binding site for (6R)-5,10-methylene-5,6,7,8-tetrahydrofolate. Ser267 contacts (6R)-5,10-methylene-5,6,7,8-tetrahydrofolate.

Belongs to the thymidylate synthase family. Bacterial-type ThyA subfamily. Homodimer.

It localises to the cytoplasm. It catalyses the reaction dUMP + (6R)-5,10-methylene-5,6,7,8-tetrahydrofolate = 7,8-dihydrofolate + dTMP. The protein operates within pyrimidine metabolism; dTTP biosynthesis. In terms of biological role, catalyzes the reductive methylation of 2'-deoxyuridine-5'-monophosphate (dUMP) to 2'-deoxythymidine-5'-monophosphate (dTMP) while utilizing 5,10-methylenetetrahydrofolate (mTHF) as the methyl donor and reductant in the reaction, yielding dihydrofolate (DHF) as a by-product. This enzymatic reaction provides an intracellular de novo source of dTMP, an essential precursor for DNA biosynthesis. The chain is Thymidylate synthase from Corynebacterium aurimucosum (strain ATCC 700975 / DSM 44827 / CIP 107346 / CN-1) (Corynebacterium nigricans).